A 169-amino-acid chain; its full sequence is Putative tRNA (cytidine(34)-2'-O)-methyltransferase (169 aa).

S-adenosyl-L-methionine is bound by residues isoleucine 79, glycine 104, isoleucine 125, and serine 133.

This sequence belongs to the class IV-like SAM-binding methyltransferase superfamily. RNA methyltransferase TrmH family. TrmL subfamily.

The protein localises to the cytoplasm. It carries out the reaction cytidine(34) in tRNA + S-adenosyl-L-methionine = 2'-O-methylcytidine(34) in tRNA + S-adenosyl-L-homocysteine + H(+). It catalyses the reaction 5-carboxymethylaminomethyluridine(34) in tRNA(Leu) + S-adenosyl-L-methionine = 5-carboxymethylaminomethyl-2'-O-methyluridine(34) in tRNA(Leu) + S-adenosyl-L-homocysteine + H(+). Its function is as follows. Could methylate the ribose at the nucleotide 34 wobble position in tRNA. In Listeria monocytogenes serotype 4b (strain F2365), this protein is Putative tRNA (cytidine(34)-2'-O)-methyltransferase.